Here is a 115-residue protein sequence, read N- to C-terminus: C-type natriuretic peptide prohormone (115 aa).

Residues 24–49 (PSDELNNEAEEMSPAASLPELNADQS) form a disordered region. C99 and C115 form a disulfide bridge.

It belongs to the natriuretic peptide family. As to expression, CNP-115 is differentially processed to produce CNP-38 and CNP-39 in the heart and CNP-22 in the brain.

Its subcellular location is the secreted. Its function is as follows. Hormone which may be vasoactive and natriuretic. Has a cGMP-stimulating activity. The sequence is that of C-type natriuretic peptide prohormone from Scyliorhinus canicula (Small-spotted catshark).